A 48-amino-acid polypeptide reads, in one-letter code: ATP synthase protein 8 (48 aa).

Methionine 1 carries the N-formylmethionine modification. Residues 1 to 12 are Mitochondrial intermembrane-facing; the sequence is MPQLVPFYFTNQ. A helical transmembrane segment spans residues 13 to 32; sequence IFYGFASLSVIVYLFSIYIL. The Mitochondrial matrix segment spans residues 33-48; that stretch reads PHYLEIYVTRIFITKT.

F-type ATP synthases have 2 components, the catalytic core F(1) and the membrane-embedded component F(0), linked together by a central stalk and a peripheral stalk. The central stalk, also called rotor shaft, is often seen as part of F(1). The peripheral stalk is seen as part of F(0). F(0) contains the membrane channel next to the rotor. F-type ATP synthases form dimers but each monomer functions independently in ATP generation. The dimer consists of 17 different polypeptides: ATP1 (subunit alpha, 3 molecules per monomer, part of F(1)), ATP2 (subunit beta, 3 copies per monomer, part of F(1)), ATP3 (subunit gamma, part of the central stalk), ATP4 (subunit b, part of the peripheral stalk), ATP5/OSCP (subunit 5/OSCP, part of the peripheral stalk), ATP6 (subunit a, part of the peripheral stalk), ATP7 (subunit d, part of the peripheral stalk), ATP8 (subunit 8, part of the peripheral stalk), OLI1 (subunit c, part of the rotor, 10 molecules per monomer), ATP14 (subunit h, part of the peripheral stalk), ATP15 (subunit epsilon, part of the central stalk), ATP16 (subunit delta, part of the central stalk), ATP17 (subunit f, part of the peripheral stalk), ATP18 (subunit i/j, part of the peripheral stalk), ATP19 (subunit k, dimer-specific, at interface between monomers), ATP20 (subunit g, at interface between monomers), TIM11 (subunit e, at interface between monomers).

The protein resides in the mitochondrion inner membrane. Its function is as follows. Mitochondrial membrane ATP synthase (F(1)F(0) ATP synthase or Complex V) produces ATP from ADP in the presence of a proton gradient across the membrane which is generated by electron transport complexes of the respiratory chain. F-type ATP synthases consist of two structural domains, F(1) - containing the extramembraneous catalytic core, and F(0) - containing the membrane proton channel, linked together by a central stalk and a peripheral stalk. During catalysis, ATP synthesis in the catalytic domain of F(1) is coupled via a rotary mechanism of the central stalk subunits to proton translocation. Part of the complex F(0) domain. Minor subunit located with subunit a/ATP6 in the membrane. This Yarrowia lipolytica (strain CLIB 122 / E 150) (Yeast) protein is ATP synthase protein 8.